The following is a 99-amino-acid chain: Nucleoid-associated protein UUR10_0100 (99 aa).

This sequence belongs to the YbaB/EbfC family. As to quaternary structure, homodimer.

It is found in the cytoplasm. It localises to the nucleoid. Binds to DNA and alters its conformation. May be involved in regulation of gene expression, nucleoid organization and DNA protection. In Ureaplasma urealyticum serovar 10 (strain ATCC 33699 / Western), this protein is Nucleoid-associated protein UUR10_0100.